Here is a 199-residue protein sequence, read N- to C-terminus: ATP-dependent Clp protease proteolytic subunit (199 aa).

Residue Ser-97 is the Nucleophile of the active site. Residue His-122 is part of the active site.

Belongs to the peptidase S14 family. Fourteen ClpP subunits assemble into 2 heptameric rings which stack back to back to give a disk-like structure with a central cavity, resembling the structure of eukaryotic proteasomes.

The protein localises to the cytoplasm. The catalysed reaction is Hydrolysis of proteins to small peptides in the presence of ATP and magnesium. alpha-casein is the usual test substrate. In the absence of ATP, only oligopeptides shorter than five residues are hydrolyzed (such as succinyl-Leu-Tyr-|-NHMec, and Leu-Tyr-Leu-|-Tyr-Trp, in which cleavage of the -Tyr-|-Leu- and -Tyr-|-Trp bonds also occurs).. Its function is as follows. Cleaves peptides in various proteins in a process that requires ATP hydrolysis. Has a chymotrypsin-like activity. Plays a major role in the degradation of misfolded proteins. In Pelobacter propionicus (strain DSM 2379 / NBRC 103807 / OttBd1), this protein is ATP-dependent Clp protease proteolytic subunit.